The chain runs to 241 residues: Sugar fermentation stimulation protein homolog (241 aa).

It belongs to the SfsA family.

In Nostoc punctiforme (strain ATCC 29133 / PCC 73102), this protein is Sugar fermentation stimulation protein homolog.